The sequence spans 473 residues: Calcium uptake protein 1, mitochondrial (473 aa).

Residues 1–33 constitute a mitochondrion transit peptide; that stretch reads MFRLRFIPAVAGLAAVSRRYHGVANHARSRRRL. The tract at residues 61 to 101 is disordered; the sequence is SSVKHSMREETSEKEKEDADQAVESSDEDQPQEGKKKKARV. Residues 66–79 show a composition bias toward basic and acidic residues; it reads SMREETSEKEKEDA. Residues 80 to 91 show a composition bias toward acidic residues; it reads DQAVESSDEDQP. Residues 96-107 form a polybasic region region; it reads KKKARVGFRDRK. The segment at 123 to 126 is k/R-ring; the sequence is KIFR. An EF-hand 1 domain is found at 215 to 250; sequence TPQRNFEIAFKMFDLNGDGEVDMEEFEQVQSIIRSQ. Residues D228, N230, D232, E234, and E239 each contribute to the Ca(2+) site. The interval 256–260 is k/R-ring; that stretch reads RHRDR. In terms of domain architecture, EF-hand 2 spans 405 to 440; the sequence is LSDHVCDVVFALFDCDGNGELSNKEFIAIMKQRLMR. Ca(2+) is bound by residues D418, D420, N422, E424, and E429. The tract at residues 452 to 462 is C-helix region; that stretch reads RLMRAMWKCAQ.

Belongs to the MICU1 family. MICU1 subfamily. In terms of assembly, heterodimer; disulfide-linked; heterodimerizes with micu2. Component of the uniplex complex.

Its subcellular location is the mitochondrion intermembrane space. The protein localises to the mitochondrion inner membrane. Functionally, calcium sensor of the mitochondrial calcium uniporter (mcu) channel, which senses calcium level via its EF-hand domains. micu1 and micu2 form a disulfide-linked heterodimer that stimulates and inhibits MCU activity, depending on the concentration of calcium. At low calcium levels, micu1 occludes the pore of the MCU channel, preventing mitochondrial calcium uptake. At higher calcium levels, calcium-binding to micu1 and micu2 induces a conformational change that weakens mcu-micu1 interactions and moves the micu1-micu2 heterodimer away from the pore, allowing calcium permeation through the mcu channel. Also required to protect against manganese toxicity by preventing manganese uptake by mcu. This chain is Calcium uptake protein 1, mitochondrial (micu1), found in Xenopus tropicalis (Western clawed frog).